A 288-amino-acid chain; its full sequence is MDSQYFLAFSLSLLLIFSQISSFSFSVDPTRITQLSWTPRAFLYKGFLSDEECDHLIKLAKGKLEKSMVVADVDSGESEDSEVRTSSGMFLTKRQDDIVANVEAKLAAWTFLPEENGEALQILHYENGQKYDPHFDYFYDKKALELGGHRIATVLMYLSNVTKGGETVFPNWKGKTPQLKDDSWSKCAKQGYAVKPRKGDALLFFNLHLNGTTDPNSLHGSCPVIEGEKWSATRWIHVRSFGKKKLVCVDDHESCQEWADAGECEKNPMYMVGSETSLGFCRKSCKAC.

Residues 1–4 (MDSQ) lie on the Cytoplasmic side of the membrane. The helical; Signal-anchor for type II membrane protein transmembrane segment at 5–27 (YFLAFSLSLLLIFSQISSFSFSV) threads the bilayer. At 28-288 (DPTRITQLSW…GFCRKSCKAC (261 aa)) the chain is on the lumenal side. The 123-residue stretch at 116–238 (NGEALQILHY…KWSATRWIHV (123 aa)) folds into the Fe2OG dioxygenase domain. Fe cation-binding residues include His134 and Asp136. Residues Asn160 and Asn210 are each glycosylated (N-linked (GlcNAc...) asparagine). Fe cation is bound at residue His219. Lys229 contributes to the 2-oxoglutarate binding site. The region spanning 248–288 (CVDDHESCQEWADAGECEKNPMYMVGSETSLGFCRKSCKAC) is the ShKT domain. 3 cysteine pairs are disulfide-bonded: Cys248–Cys288, Cys255–Cys281, and Cys264–Cys285.

It belongs to the P4HA family. Fe(2+) serves as cofactor. The cofactor is L-ascorbate.

It localises to the endoplasmic reticulum membrane. The catalysed reaction is L-prolyl-[collagen] + 2-oxoglutarate + O2 = trans-4-hydroxy-L-prolyl-[collagen] + succinate + CO2. In terms of biological role, catalyzes the post-translational formation of 4-hydroxyproline in -Xaa-Pro-Gly- sequences in proline-rich peptide sequences of plant glycoproteins and other proteins. Hydroxyprolines are important constituent of many plant cell wall glycoproteins such as extensins, hydroxyproline-rich glycoproteins, lectins and arabinogalactan proteins. The chain is Probable prolyl 4-hydroxylase 6 from Arabidopsis thaliana (Mouse-ear cress).